We begin with the raw amino-acid sequence, 24 residues long: Humanin-like 13 (24 aa).

The protein belongs to the humanin family.

The protein resides in the secreted. It is found in the cytoplasm. Its function is as follows. Plays a role as a neuroprotective and antiapoptotic factor. The polypeptide is Humanin-like 13 (Homo sapiens (Human)).